A 736-amino-acid chain; its full sequence is 1,4-alpha-glucan branching enzyme GlgB (736 aa).

D415 functions as the Nucleophile in the catalytic mechanism. The Proton donor role is filled by E470.

It belongs to the glycosyl hydrolase 13 family. GlgB subfamily. As to quaternary structure, monomer.

The catalysed reaction is Transfers a segment of a (1-&gt;4)-alpha-D-glucan chain to a primary hydroxy group in a similar glucan chain.. The protein operates within glycan biosynthesis; glycogen biosynthesis. In terms of biological role, catalyzes the formation of the alpha-1,6-glucosidic linkages in glycogen by scission of a 1,4-alpha-linked oligosaccharide from growing alpha-1,4-glucan chains and the subsequent attachment of the oligosaccharide to the alpha-1,6 position. The polypeptide is 1,4-alpha-glucan branching enzyme GlgB (Burkholderia orbicola (strain AU 1054)).